The following is a 539-amino-acid chain: O-phosphoserine--tRNA(Cys) ligase (539 aa).

Substrate contacts are provided by residues 188-190 (HMT), 233-235 (SAS), 275-276 (YY), and N327.

Belongs to the class-II aminoacyl-tRNA synthetase family. O-phosphoseryl-tRNA(Cys) synthetase subfamily. In terms of assembly, homotetramer. Interacts with SepCysS.

It carries out the reaction tRNA(Cys) + O-phospho-L-serine + ATP = O-phospho-L-seryl-tRNA(Cys) + AMP + diphosphate. Functionally, catalyzes the attachment of O-phosphoserine (Sep) to tRNA(Cys). This chain is O-phosphoserine--tRNA(Cys) ligase, found in Methanosarcina mazei (strain ATCC BAA-159 / DSM 3647 / Goe1 / Go1 / JCM 11833 / OCM 88) (Methanosarcina frisia).